The chain runs to 119 residues: Large ribosomal subunit protein uL18 (119 aa).

It belongs to the universal ribosomal protein uL18 family. Part of the 50S ribosomal subunit; part of the 5S rRNA/L5/L18/L25 subcomplex. Contacts the 5S and 23S rRNAs.

Its function is as follows. This is one of the proteins that bind and probably mediate the attachment of the 5S RNA into the large ribosomal subunit, where it forms part of the central protuberance. This chain is Large ribosomal subunit protein uL18, found in Clostridium botulinum (strain ATCC 19397 / Type A).